A 543-amino-acid polypeptide reads, in one-letter code: MTNITKRSLVAAGVLAALMAGNVALAADVPAGVTLAEKQTLVRNNGSEVQSLDPHKIEGVPESNISRDLFEGLLVSDLDGHPAPGVAESWDNKDAKVWTFHLRKDAKWSDGTPVTAQDFVYSWQRSVDPNTASPYASYLQYGHIAGIDEILEGKKPITDLGVKAIDDHTLEVTLSEPVPYFYKLLVHPSTSPVPKAAIEKFGEKWTQPGNIVTNGAYTLKDWVVNERIVLERSPTYWNNAKTVINQVTYLPIASEVTDVNRYRSGEIDMTNNSMPIELFQKLKKEIPDEVHVDPYLCTYYYEINNQKPPFNDVRVRTALKLGMDRDIIVNKVKAQGNMPAYGYTPPYTDGAKLTQPEWFGWSQEKRNEEAKKLLAEAGYTADKPLTINLLYNTSDLHKKLAIAASSLWKKNIGVNVKLVNQEWKTFLDTRHQGTFDVARAGWCADYNEPTSFLNTMLSNSSMNTAHYKSPAFDSIMAETLKVTDEAQRTALYTKAEQQLDKDSAIVPVYYYVNARLVKPWVGGYTGKDPLDNTYTRNMYIVKH.

Residues 1–26 form the signal peptide; sequence MTNITKRSLVAAGVLAALMAGNVALA. C297 and C443 form a disulfide bridge.

The protein belongs to the bacterial solute-binding protein 5 family. As to quaternary structure, the complex is composed of two ATP-binding proteins (OppD and OppF), two transmembrane proteins (OppB and OppC) and a solute-binding protein (OppA).

It is found in the periplasm. Its function is as follows. Part of the ABC transporter complex OppABCDF involved in the uptake of oligopeptides. Plays an important nutritional role. Binds peptides containing from two to five amino acid residues. Displays a preference for tripeptides and tetrapeptides over dipeptides and pentapeptides, for peptides composed of L-amino acids and for positively charged peptides. Cannot bind the cell wall peptide L-Ala-D-Gly-gamma-meso-diaminopimelic acid. The chain is Periplasmic oligopeptide-binding protein OppA from Escherichia coli (strain K12).